A 384-amino-acid polypeptide reads, in one-letter code: Spermidine/putrescine import ATP-binding protein PotA (384 aa).

The ABC transporter domain occupies 6 to 238; the sequence is IAFQNVSKVF…PINHFVATFI (233 aa). 40–47 is a binding site for ATP; it reads GASGSGKS.

It belongs to the ABC transporter superfamily. Spermidine/putrescine importer (TC 3.A.1.11.1) family. In terms of assembly, the complex is composed of two ATP-binding proteins (PotA), two transmembrane proteins (PotB and PotC) and a solute-binding protein (PotD).

The protein localises to the cell membrane. The catalysed reaction is ATP + H2O + polyamine-[polyamine-binding protein]Side 1 = ADP + phosphate + polyamineSide 2 + [polyamine-binding protein]Side 1.. Functionally, part of the ABC transporter complex PotABCD involved in spermidine/putrescine import. Responsible for energy coupling to the transport system. The chain is Spermidine/putrescine import ATP-binding protein PotA from Streptococcus thermophilus (strain ATCC BAA-250 / LMG 18311).